We begin with the raw amino-acid sequence, 271 residues long: Aquaporin-1 (271 aa).

The Cytoplasmic portion of the chain corresponds to 1 to 11; the sequence is MASEFKKKLFW. The chain crosses the membrane as a helical span at residues 12-29; it reads RAVVAEFLAMILFIFISI. At 30–48 the chain is on the extracellular side; it reads GSALGFHYPIKSNQTTGAV. The N-linked (GlcNAc...) asparagine glycan is linked to Asn42. The helical transmembrane segment at 49-67 threads the bilayer; that stretch reads QDNVKVSLAFGLSIATLAQ. The Cytoplasmic segment spans residues 68-70; that stretch reads SVG. The stretch at 71 to 84 is an intramembrane region; the sequence is HISGAHLNPAVTLG. An NPA 1 motif is present at residues 78–80; that stretch reads NPA. The Cytoplasmic segment spans residues 85–92; sequence LLLSCQIS. A helical membrane pass occupies residues 93 to 111; the sequence is VLRAIMYIIAQCVGAIVAT. At 112–135 the chain is on the extracellular side; sequence AILSGITSSLPDNSLGLNALAPGV. Residues 136–155 traverse the membrane as a helical segment; the sequence is NSGQGLGIEIIGTLQLVLCV. Over 156 to 165 the chain is Cytoplasmic; that stretch reads LATTDRRRRD. A helical transmembrane segment spans residues 166-183; sequence LGGSGPLAIGFSVALGHL. At 184–188 the chain is on the extracellular side; the sequence is LAIDY. The stretch at 189–201 is an intramembrane region; sequence TGCGINPARSFGS. The NPA 2 motif lies at 194–196; that stretch reads NPA. The Extracellular segment spans residues 202-208; the sequence is SVITHNF. Residues 209–226 traverse the membrane as a helical segment; the sequence is QDHWIFWVGPFIGAALAV. Over 227 to 271 the chain is Cytoplasmic; sequence LIYDFILAPRSSDLTDRVKVWTSGQVEEYDLDADDINSRVEMKPK. Ser249 is modified (phosphoserine). Position 255 is a phosphotyrosine (Tyr255). Ser264 carries the post-translational modification Phosphoserine.

This sequence belongs to the MIP/aquaporin (TC 1.A.8) family. As to quaternary structure, homotetramer; each monomer provides an independent water pore. Component of the ankyrin-1 complex in the erythrocyte, composed of ANK1, RHCE, RHAG, SLC4A1, EPB42, GYPA, GYPB and AQP1. Interacts with EPHB2; involved in endolymph production in the inner ear. Identified in a complex with STOM. Interacts (via the N-terminal) with ANK1 (via ANK 1-5 repeats). Interacts (via the C-terminal) with EPB42.

The protein resides in the cell membrane. It catalyses the reaction H2O(in) = H2O(out). The enzyme catalyses nitric oxide(out) = nitric oxide(in). It carries out the reaction CO2(out) = CO2(in). The catalysed reaction is glycerol(in) = glycerol(out). It catalyses the reaction H2O2(out) = H2O2(in). The enzyme catalyses K(+)(in) = K(+)(out). It carries out the reaction Na(+)(in) = Na(+)(out). In terms of biological role, forms a water channel that facilitates the transport of water across cell membranes, playing a crucial role in water homeostasis in various tissues. Could also be permeable to small solutes including hydrogen peroxide, glycerol and gases such as amonnia (NH3), nitric oxide (NO) and carbon dioxide (CO2). Recruited to the ankyrin-1 complex, a multiprotein complex of the erythrocyte membrane, it could be part of a CO2 metabolon, linking facilitated diffusion of CO2 across the membrane, anion exchange of Cl(-)/HCO3(-) and interconversion of dissolved CO2 and carbonic acid in the cytosol. In vitro, it shows non-selective gated cation channel activity and may be permeable to cations like K(+) and Na(+) in vivo. In Bos taurus (Bovine), this protein is Aquaporin-1.